A 594-amino-acid polypeptide reads, in one-letter code: Cryptochrome-2 (594 aa).

The 130-residue stretch at 21–150 (ASSVHWFRKG…EVVTENSHTL (130 aa)) folds into the Photolyase/cryptochrome alpha/beta domain. A Glycyl lysine isopeptide (Lys-Gly) (interchain with G-Cter in ubiquitin) cross-link involves residue lysine 29. Phosphoserine is present on serine 89. Residues lysine 125 and lysine 241 each participate in a glycyl lysine isopeptide (Lys-Gly) (interchain with G-Cter in ubiquitin) cross-link. Serine 265 is subject to Phosphoserine; by MAPK. Serine 270 provides a ligand contact to FAD. At serine 298 the chain carries Phosphoserine. Position 307 (glutamine 307) interacts with FAD. A Glycyl lysine isopeptide (Lys-Gly) (interchain with G-Cter in ubiquitin) cross-link involves residue lysine 347. Residues histidine 373 and 405–407 (DAD) each bind FAD. The tract at residues 389–488 (WVSWESGVRV…IIGVDYPRPI (100 aa)) is required for inhibition of CLOCK-BMAL1-mediated transcription. Glycyl lysine isopeptide (Lys-Gly) (interchain with G-Cter in ubiquitin) cross-links involve residues lysine 474 and lysine 503. Residues 532–594 (VAEPGSSQAG…PAQEPPSKDS (63 aa)) are disordered. Positions 536 to 547 (GSSQAGSISNTG) are enriched in polar residues. Serine 553 carries the post-translational modification Phosphoserine; by GSK3-beta. A Phosphoserine; by DYRK1A and MAPK modification is found at serine 557.

This sequence belongs to the DNA photolyase class-1 family. In terms of assembly, component of the circadian core oscillator, which includes the CRY proteins, CLOCK or NPAS2, BMAL1 or BMAL2, CSNK1D and/or CSNK1E, TIMELESS, and the PER proteins. Interacts with TIMELESS. Interacts directly with PER1, PER2 and PER3; interaction with PER2 inhibits its ubiquitination and vice versa. Interacts with CLOCK-BMAL1. Interacts with CLOCK. Interacts with BMAL1. Interacts with NFIL3. Interacts with FBXL3 and FBXL21. FBXL3, PER2 and the cofactor FAD compete for overlapping binding sites. FBXL3 cannot bind CRY2 that interacts already with PER2 or that contains bound FAD. Interacts with PPP5C (via TPR repeats); the interaction down-regulates the PPP5C phosphatase activity on CSNK1E. Interacts with nuclear receptors AR and NR3C1/GR; the interaction is ligand dependent. Interacts with PRKDC and CIART. Interacts with DDB1, USP7 and TARDBP. Interacts with HNF4A and PPARA. Interacts with PPARD (via domain NR LBD) and NR1I2 (via domain NR LBD) in a ligand-dependent manner. Interacts with PPARG, NR1I3 and VDR in a ligand-dependent manner. Requires FAD as cofactor. It depends on (6R)-5,10-methylene-5,6,7,8-tetrahydrofolate as a cofactor. Post-translationally, phosphorylation on Ser-265 by MAPK is important for the inhibition of CLOCK-BMAL1-mediated transcriptional activity. Phosphorylation by CSKNe requires interaction with PER1 or PER2. Phosphorylated in a circadian manner at Ser-553 and Ser-557 in the suprachiasmatic nucleus (SCN) and liver. Phosphorylation at Ser-557 by DYRK1A promotes subsequent phosphorylation at Ser-553 by GSK3-beta: the two-step phosphorylation at the neighboring Ser residues leads to its proteasomal degradation. Ubiquitinated by the SCF(FBXL3) and SCF(FBXL21) complexes, regulating the balance between degradation and stabilization. The SCF(FBXL3) complex is mainly nuclear and mediates ubiquitination and subsequent degradation of CRY2. In contrast, cytoplasmic SCF(FBXL21) complex-mediated ubiquitination leads to stabilize CRY2 and counteract the activity of the SCF(FBXL3) complex. The SCF(FBXL3) and SCF(FBXL21) complexes probably mediate ubiquitination at different Lys residues. The SCF(FBXL3) complex recognizes and binds CRY2 phosphorylated at Ser-553 and Ser-557. Ubiquitination may be inhibited by PER2. Deubiquitinated by USP7. As to expression, expressed in all tissues examined including heart, cerebellum, cerebral cortex, lung, liver, muscle, kidney and ovary. Highest levels in heart, liver and ovary. Highly expressed in the suprachiasmatic nucleus (SCN).

Its subcellular location is the cytoplasm. The protein resides in the nucleus. Transcriptional repressor which forms a core component of the circadian clock. The circadian clock, an internal time-keeping system, regulates various physiological processes through the generation of approximately 24 hour circadian rhythms in gene expression, which are translated into rhythms in metabolism and behavior. It is derived from the Latin roots 'circa' (about) and 'diem' (day) and acts as an important regulator of a wide array of physiological functions including metabolism, sleep, body temperature, blood pressure, endocrine, immune, cardiovascular, and renal function. Consists of two major components: the central clock, residing in the suprachiasmatic nucleus (SCN) of the brain, and the peripheral clocks that are present in nearly every tissue and organ system. Both the central and peripheral clocks can be reset by environmental cues, also known as Zeitgebers (German for 'timegivers'). The predominant Zeitgeber for the central clock is light, which is sensed by retina and signals directly to the SCN. The central clock entrains the peripheral clocks through neuronal and hormonal signals, body temperature and feeding-related cues, aligning all clocks with the external light/dark cycle. Circadian rhythms allow an organism to achieve temporal homeostasis with its environment at the molecular level by regulating gene expression to create a peak of protein expression once every 24 hours to control when a particular physiological process is most active with respect to the solar day. Transcription and translation of core clock components (CLOCK, NPAS2, BMAL1, BMAL2, PER1, PER2, PER3, CRY1 and CRY2) plays a critical role in rhythm generation, whereas delays imposed by post-translational modifications (PTMs) are important for determining the period (tau) of the rhythms (tau refers to the period of a rhythm and is the length, in time, of one complete cycle). A diurnal rhythm is synchronized with the day/night cycle, while the ultradian and infradian rhythms have a period shorter and longer than 24 hours, respectively. Disruptions in the circadian rhythms contribute to the pathology of cardiovascular diseases, cancer, metabolic syndromes and aging. A transcription/translation feedback loop (TTFL) forms the core of the molecular circadian clock mechanism. Transcription factors, CLOCK or NPAS2 and BMAL1 or BMAL2, form the positive limb of the feedback loop, act in the form of a heterodimer and activate the transcription of core clock genes and clock-controlled genes (involved in key metabolic processes), harboring E-box elements (5'-CACGTG-3') within their promoters. The core clock genes: PER1/2/3 and CRY1/2 which are transcriptional repressors form the negative limb of the feedback loop and interact with the CLOCK|NPAS2-BMAL1|BMAL2 heterodimer inhibiting its activity and thereby negatively regulating their own expression. This heterodimer also activates nuclear receptors NR1D1/2 and RORA/B/G, which form a second feedback loop and which activate and repress BMAL1 transcription, respectively. CRY1 and CRY2 have redundant functions but also differential and selective contributions at least in defining the pace of the SCN circadian clock and its circadian transcriptional outputs. Less potent transcriptional repressor in cerebellum and liver than CRY1, though less effective in lengthening the period of the SCN oscillator. Seems to play a critical role in tuning SCN circadian period by opposing the action of CRY1. With CRY1, dispensable for circadian rhythm generation but necessary for the development of intercellular networks for rhythm synchrony. May mediate circadian regulation of cAMP signaling and gluconeogenesis by blocking glucagon-mediated increases in intracellular cAMP concentrations and in CREB1 phosphorylation. Besides its role in the maintenance of the circadian clock, is also involved in the regulation of other processes. Plays a key role in glucose and lipid metabolism modulation, in part, through the transcriptional regulation of genes involved in these pathways, such as LEP or ACSL4. Represses glucocorticoid receptor NR3C1/GR-induced transcriptional activity by binding to glucocorticoid response elements (GREs). Represses the CLOCK-BMAL1 induced transcription of BHLHE40/DEC1 and NAMPT. Represses PPARD and its target genes in the skeletal muscle and limits exercise capacity. Represses the transcriptional activity of NR1I2. The sequence is that of Cryptochrome-2 (Cry2) from Rattus norvegicus (Rat).